Consider the following 597-residue polypeptide: Nucleolar protein 58 (597 aa).

One can recognise a Nop domain in the interval 285–410 (IAPNMTELVG…LENNLRQLEG (126 aa)). Residues 452 to 597 (AEAPKKPLIQ…KKKKKKSSKE (146 aa)) are disordered. The segment covering 482-499 (KSKKDKKEKKEKKDKKAK) has biased composition (basic residues). The segment covering 532 to 551 (IKEDGTLEILSKKDFKGKDA) has biased composition (basic and acidic residues). The span at 552 to 561 (EAEEEAEEEE) shows a compositional bias: acidic residues. Residues 588-597 (KKKKKKSSKE) are compositionally biased toward basic residues.

The protein belongs to the NOP5/NOP56 family.

The protein resides in the nucleus. The protein localises to the nucleolus. Functionally, required for pre-18S rRNA processing. May bind microtubules. The protein is Nucleolar protein 58 (nop-58) of Neurospora crassa (strain ATCC 24698 / 74-OR23-1A / CBS 708.71 / DSM 1257 / FGSC 987).